We begin with the raw amino-acid sequence, 105 residues long: Small ribosomal subunit protein uS10 (105 aa).

Belongs to the universal ribosomal protein uS10 family. Part of the 30S ribosomal subunit.

Its function is as follows. Involved in the binding of tRNA to the ribosomes. The chain is Small ribosomal subunit protein uS10 from Gloeothece citriformis (strain PCC 7424) (Cyanothece sp. (strain PCC 7424)).